The following is a 498-amino-acid chain: MVAPSETQIVQAVKAKLESGLTSTSDVVREDEVRRLLATLELEHDWQDIAVKKFISILCKHSLMPVSKPNDGCTSRSTSCPGGKKKKKSKTDTSIPKSFIDPTISFPAGIRGVYFDPVKGKGLVATRSFSKGDLLFTEDAYIPTPPPEAFDQMASGQLCAQCFLPISSAPVALAIKNCSKCKHRFCTTACYKTAMATHHTLLCTGINASAKPLIELIERQKWQSLHCVARSLARLLMTLTRQYHGQANKKADTQDSVATYGDFETVYARLSSFATVSELERRSRNPGWTTEKASFESILVEAHTALCNALDPYSSTRNANLEPFHVSADYLDSTRKPLIKDLFCLATFMKLVGRANINMEKFGGLYSLHSFLNHSCSPNLEIRHVPERAILSSMKVAAIALCDIHPDDELVISYIDPNTSLARRQLLLYRDYCFGPCTCDKCTTQLGALGLVYDPAKHAVKAFLDSVAHKTRPDPDHTLPPTSQDSTLEDQLRASLGF.

The tract at residues 68 to 94 (KPNDGCTSRSTSCPGGKKKKKSKTDTS) is disordered. The SET domain occupies 108 to 415 (AGIRGVYFDP…PDDELVISYI (308 aa)).

It belongs to the class V-like SAM-binding methyltransferase superfamily. Histone-lysine methyltransferase family. SET5 subfamily.

It localises to the nucleus. Its subcellular location is the chromosome. The protein resides in the cytoplasm. The catalysed reaction is L-lysyl-[histone] + S-adenosyl-L-methionine = N(6)-methyl-L-lysyl-[histone] + S-adenosyl-L-homocysteine + H(+). Histone methyltransferase that monomethylates 'Lys-5', 'Lys-8' and 'Lys-12' of histone H4 (H4K5me1, H4K8me1 and H4K12me1, respectively), thereby controlling gene expression and remodeling chromatin structures. The chain is Histone-lysine N-methyltransferase SET5 (SET5) from Mycosarcoma maydis (Corn smut fungus).